A 197-amino-acid chain; its full sequence is Phosphoheptose isomerase (197 aa).

In terms of domain architecture, SIS spans 36–197 (LFAALANNGR…IDALLLGDTE (162 aa)). 51 to 53 (NGG) contributes to the substrate binding site. Histidine 60 and glutamate 64 together coordinate Zn(2+). Residues glutamate 64, 93–94 (ND), 119–121 (STS), serine 124, and glutamine 174 each bind substrate. 2 residues coordinate Zn(2+): glutamine 174 and histidine 182.

Belongs to the SIS family. GmhA subfamily. In terms of assembly, homotetramer. Zn(2+) is required as a cofactor.

The protein resides in the cytoplasm. It carries out the reaction 2 D-sedoheptulose 7-phosphate = D-glycero-alpha-D-manno-heptose 7-phosphate + D-glycero-beta-D-manno-heptose 7-phosphate. The protein operates within carbohydrate biosynthesis; D-glycero-D-manno-heptose 7-phosphate biosynthesis; D-glycero-alpha-D-manno-heptose 7-phosphate and D-glycero-beta-D-manno-heptose 7-phosphate from sedoheptulose 7-phosphate: step 1/1. Catalyzes the isomerization of sedoheptulose 7-phosphate in D-glycero-D-manno-heptose 7-phosphate. The protein is Phosphoheptose isomerase of Bordetella avium (strain 197N).